The following is a 295-amino-acid chain: Ventral anterior homeobox 1a (295 aa).

The segment covering I20 to Q33 has biased composition (basic and acidic residues). The interval I20 to S63 is disordered. The segment at residues P97–Q156 is a DNA-binding region (homeobox). Positions R203–P226 are disordered. Residues A204 to P222 are compositionally biased toward polar residues.

This sequence belongs to the EMX homeobox family.

It is found in the nucleus. In terms of biological role, may play a role in the specification and maintenance of basal forebrain identity. In Xenopus laevis (African clawed frog), this protein is Ventral anterior homeobox 1a (vax1-a).